The chain runs to 383 residues: Deoxyguanosinetriphosphate triphosphohydrolase-like protein (383 aa).

Residues 62 to 198 form the HD domain; that stretch reads RLTHSLEVST…AALADDISYI (137 aa).

This sequence belongs to the dGTPase family. Type 2 subfamily.

The protein is Deoxyguanosinetriphosphate triphosphohydrolase-like protein of Rickettsia felis (strain ATCC VR-1525 / URRWXCal2) (Rickettsia azadi).